A 126-amino-acid polypeptide reads, in one-letter code: Probable V-type proton ATPase subunit G (126 aa).

This sequence belongs to the V-ATPase G subunit family. In terms of assembly, V-ATPase is a heteromultimeric enzyme made up of two complexes: the ATP-hydrolytic V1 complex and the proton translocation V0 complex. The V1 complex consists of three catalytic AB heterodimers that form a heterohexamer, three peripheral stalks each consisting of EG heterodimers, one central rotor including subunits D and F, and the regulatory subunits C and H. The proton translocation complex V0 consists of the proton transport subunit a, a ring of proteolipid subunits c9c'', rotary subunit d, subunits e and f, and the accessory subunits vah-19/Ac45 and vah-20/PRR. Interacts with ced-1.

Subunit of the V1 complex of vacuolar(H+)-ATPase (V-ATPase), a multisubunit enzyme composed of a peripheral complex (V1) that hydrolyzes ATP and a membrane integral complex (V0) that translocates protons. V-ATPase is responsible for acidifying and maintaining the pH of intracellular compartments and in some cell types, is targeted to the plasma membrane, where it is responsible for acidifying the extracellular environment. In neurons, required for necrotic cell death by promoting intracellular acidification. In Caenorhabditis elegans, this protein is Probable V-type proton ATPase subunit G.